Reading from the N-terminus, the 284-residue chain is L-ribulose-5-phosphate 3-epimerase UlaE (284 aa).

Belongs to the L-ribulose-5-phosphate 3-epimerase family.

The catalysed reaction is L-ribulose 5-phosphate = L-xylulose 5-phosphate. Its pathway is cofactor degradation; L-ascorbate degradation; D-xylulose 5-phosphate from L-ascorbate: step 3/4. In terms of biological role, catalyzes the isomerization of L-xylulose-5-phosphate to L-ribulose-5-phosphate. Is involved in the anaerobic L-ascorbate utilization. This is L-ribulose-5-phosphate 3-epimerase UlaE from Escherichia coli O127:H6 (strain E2348/69 / EPEC).